We begin with the raw amino-acid sequence, 316 residues long: tRNA uridine(34) hydroxylase (316 aa).

The region spanning 123–217 is the Rhodanese domain; it reads LSDDTVVIDA…YGKDPETKGE (95 aa). The Cysteine persulfide intermediate role is filled by Cys177.

The protein belongs to the TrhO family.

The enzyme catalyses uridine(34) in tRNA + AH2 + O2 = 5-hydroxyuridine(34) in tRNA + A + H2O. Its function is as follows. Catalyzes oxygen-dependent 5-hydroxyuridine (ho5U) modification at position 34 in tRNAs. The protein is tRNA uridine(34) hydroxylase of Staphylococcus saprophyticus subsp. saprophyticus (strain ATCC 15305 / DSM 20229 / NCIMB 8711 / NCTC 7292 / S-41).